Consider the following 275-residue polypeptide: Large ribosomal subunit protein uL2c (275 aa).

Positions 222-258 are disordered; that stretch reads GSAMNPVDHPHGGGEGRAPIGRARPVSPWGRPALGAK.

This sequence belongs to the universal ribosomal protein uL2 family. In terms of assembly, part of the 50S ribosomal subunit.

Its subcellular location is the plastid. The protein resides in the chloroplast. The chain is Large ribosomal subunit protein uL2c (rpl2) from Chlorella vulgaris (Green alga).